We begin with the raw amino-acid sequence, 207 residues long: Claudin-11 (207 aa).

Met1 is a topological domain (cytoplasmic). The helical transmembrane segment at 2-22 (VATCLQVVGFVTSFVGWIGVI) threads the bilayer. Residues 23 to 82 (VTTSTNDWVVTCGYTIPTCRKLDELGSKGLWADCVMATGLYHCKPLVDILILPGYVQACR) lie on the Extracellular side of the membrane. Residues 83 to 103 (ALMIAASVLGLPAILLLLTVL) form a helical membrane-spanning segment. Over 104-122 (PCIRMGHEPGVAKYRRAQL) the chain is Cytoplasmic. A helical membrane pass occupies residues 123 to 143 (AGVLLILLALCAIVATIWFPV). Topologically, residues 144 to 157 (CAHRETTIVSFGYS) are extracellular. The helical transmembrane segment at 158–178 (LYAGWIGAVLCLVGGCVILCC) threads the bilayer. Over 179-207 (AGDAQAFGENRFYYSSGSSSPTHAKSAHV) the chain is Cytoplasmic. Residues Ser193, Ser194, Ser197, and Ser198 each carry the phosphoserine modification.

The protein belongs to the claudin family. As to quaternary structure, interacts with tetraspanin-3/TSPAN3. Interacts with OCLN.

Its subcellular location is the cell junction. The protein resides in the tight junction. It localises to the cell membrane. Plays a major role in tight junction-specific obliteration of the intercellular space, through calcium-independent cell-adhesion activity. This is Claudin-11 (CLDN11) from Macaca fascicularis (Crab-eating macaque).